Consider the following 354-residue polypeptide: NADH-quinone oxidoreductase subunit H (354 aa).

Transmembrane regions (helical) follow at residues 22–42 (ILIRAVLIVVPVLLCVAYLIL), 91–111 (YLVAPLMVLMPAVAVWAVIPF), 124–144 (LLYVMAISSVGVYGVILAGWA), 162–182 (VSYEIAMGFALVTVLMVSGSL), 203–223 (LLSWNWLPLLPMFGVYFISGV), 250–270 (GMTFALFFLAEYINMIIISTM), 291–311 (IPGFFWLVIKVFLLLSVFIWI), and 326–346 (LGWKIFIPLTVAWLIIVAIWI).

Belongs to the complex I subunit 1 family. In terms of assembly, NDH-1 is composed of 14 different subunits. Subunits NuoA, H, J, K, L, M, N constitute the membrane sector of the complex.

The protein localises to the cell inner membrane. It catalyses the reaction a quinone + NADH + 5 H(+)(in) = a quinol + NAD(+) + 4 H(+)(out). NDH-1 shuttles electrons from NADH, via FMN and iron-sulfur (Fe-S) centers, to quinones in the respiratory chain. The immediate electron acceptor for the enzyme in this species is believed to be ubiquinone. Couples the redox reaction to proton translocation (for every two electrons transferred, four hydrogen ions are translocated across the cytoplasmic membrane), and thus conserves the redox energy in a proton gradient. This subunit may bind ubiquinone. This Cupriavidus metallidurans (strain ATCC 43123 / DSM 2839 / NBRC 102507 / CH34) (Ralstonia metallidurans) protein is NADH-quinone oxidoreductase subunit H.